Here is a 517-residue protein sequence, read N- to C-terminus: MAVWQAASGKVYLPPSTPVARVQSTDEYVQRTNIYYHAYSDRLLTVGHPYFNVYNVQGSKLQIPKVSGNQHRVFRLKLPDPNRFALADMSVYNPDKERLVWACRGIEIGRGQPLGVGSVGHPLFNKVGDTENPNSYKASSTDDRQNVSFDPKQLQMFIIGCAPCIGEHWDKALPCDDGNIQQGSCPPIELINSVIEDGDMADIGYGNLNFKALQQNRADVSLDIVNETCKYPDFLKMQNDVYGDSCFFYARREQCYARHFFVRGGKTGDDIPAGQIDEGSMKNAFYIPPNSSQAQYNNLGNSMYFPTVSGSLVSSDAQLFNRPFWLQRAQGHNNGICWFNQLFVTVVDNTRNTNFSISINSDGTDVSKITDYNSQKFTEYLRHVEEYELSLILQLCKVPLKAEILAQINAMNSNILEEWQLGFVPAPDNSIQDTYRYIDSLATRCPDKNPPKEKVDPYKNLHFWDVDLTERLSLDLDQYSLGRKFLFQAGLQQTTVNGTKTVSSRISTRGIKRKRKN.

This sequence belongs to the papillomaviridae L1 protein family. In terms of assembly, self-assembles into homopentamers. The capsid has an icosahedral symmetry and consists of 72 capsomers, with each capsomer being a pentamer of L1. Interacts with the minor capsid protein L2; this interaction is necessary for viral genome encapsidation. Interacts with protein E2; this interaction enhances E2-dependent replication and transcription activation.

It localises to the virion. The protein localises to the host nucleus. Its function is as follows. Forms an icosahedral capsid with a T=7 symmetry and a 50 nm diameter. The capsid is composed of 72 pentamers linked to each other by disulfide bonds and associated with L2 proteins. Binds to heparan sulfate proteoglycans on cell surface of basal layer keratinocytes to provide initial virion attachment. This binding mediates a conformational change in the virus capsid that facilitates efficient infection. The virion enters the host cell via endocytosis. During virus trafficking, L1 protein dissociates from the viral DNA and the genomic DNA is released to the host nucleus. The virion assembly takes place within the cell nucleus. Encapsulates the genomic DNA together with protein L2. The polypeptide is Major capsid protein L1 (Human papillomavirus 25).